Here is a 322-residue protein sequence, read N- to C-terminus: TATA box-binding protein-associated factor RNA polymerase I subunit D (322 aa).

2 disordered regions span residues 1 to 70 and 82 to 116; these read MAQS…SIEP and FKKKKRKKRKKRKYEPKLRPRGRPRGKPSGTRITR. A Phosphoserine modification is found at Ser-23. Basic residues predominate over residues 82–107; the sequence is FKKKKRKKRKKRKYEPKLRPRGRPRG. Ser-137 is modified (phosphoserine). The segment at 198–219 is disordered; it reads YMDDDGSLSPIEEPLTEDEATN. Phosphoserine is present on Ser-232. Basic and acidic residues predominate over residues 257-267; sequence FSKKAKDATHR. The tract at residues 257–276 is disordered; sequence FSKKAKDATHREKGHRRTLK.

Component of the transcription factor SL1/TIF-IB complex, composed of TBP and at least TAF1A, TAF1B, TAF1C and TAF1D. Interacts with UBTF.

The protein resides in the nucleus. Functionally, component of the transcription factor SL1/TIF-IB complex, which is involved in the assembly of the PIC (preinitiation complex) during RNA polymerase I-dependent transcription. The rate of PIC formation probably is primarily dependent on the rate of association of SL1/TIF-IB with the rDNA promoter. SL1/TIF-IB is involved in stabilization of nucleolar transcription factor 1/UBTF on rDNA. Formation of SL1/TIF-IB excludes the association of TBP with TFIID subunits. This Mus musculus (Mouse) protein is TATA box-binding protein-associated factor RNA polymerase I subunit D (Taf1d).